A 241-amino-acid polypeptide reads, in one-letter code: Octanoyltransferase (241 aa).

A BPL/LPL catalytic domain is found at 49-233 (GEASELVWLL…AFGEVFGPSE (185 aa)). Residues 87-94 (RGGQVTYH), 162-164 (AIG), and 175-177 (GIS) each bind substrate. The active-site Acyl-thioester intermediate is C193.

The protein belongs to the LipB family.

It localises to the cytoplasm. The catalysed reaction is octanoyl-[ACP] + L-lysyl-[protein] = N(6)-octanoyl-L-lysyl-[protein] + holo-[ACP] + H(+). The protein operates within protein modification; protein lipoylation via endogenous pathway; protein N(6)-(lipoyl)lysine from octanoyl-[acyl-carrier-protein]: step 1/2. In terms of biological role, catalyzes the transfer of endogenously produced octanoic acid from octanoyl-acyl-carrier-protein onto the lipoyl domains of lipoate-dependent enzymes. Lipoyl-ACP can also act as a substrate although octanoyl-ACP is likely to be the physiological substrate. The sequence is that of Octanoyltransferase from Nitrobacter hamburgensis (strain DSM 10229 / NCIMB 13809 / X14).